A 395-amino-acid polypeptide reads, in one-letter code: Protein-arginine rhamnosyltransferase (395 aa).

Residues 19–22 (NYGD), Tyr205, Gln272, and 288–292 (RGEDS) contribute to the dTDP-beta-L-rhamnose site. The Proton acceptor role is filled by Asp22. The active site involves Glu290.

The protein belongs to the glycosyltransferase 104 family.

It carries out the reaction dTDP-beta-L-rhamnose + L-arginyl-[protein] = N(omega)-(alpha-L-rhamnosyl)-L-arginyl-[protein] + dTDP + H(+). Its function is as follows. Protein-arginine rhamnosyltransferase that catalyzes the transfer of a single rhamnose to elongation factor P (EF-P) on 'Lys-32', a modification required for EF-P-dependent rescue of polyproline stalled ribosomes. The chain is Protein-arginine rhamnosyltransferase from Shewanella oneidensis (strain ATCC 700550 / JCM 31522 / CIP 106686 / LMG 19005 / NCIMB 14063 / MR-1).